The following is a 454-amino-acid chain: Trigger factor (454 aa).

The region spanning 169–261 is the PPIase FKBP-type domain; that stretch reads GDVAIADYEG…LKELKSRELP (93 aa).

This sequence belongs to the FKBP-type PPIase family. Tig subfamily.

The protein resides in the cytoplasm. The catalysed reaction is [protein]-peptidylproline (omega=180) = [protein]-peptidylproline (omega=0). In terms of biological role, involved in protein export. Acts as a chaperone by maintaining the newly synthesized protein in an open conformation. Functions as a peptidyl-prolyl cis-trans isomerase. In Picosynechococcus sp. (strain ATCC 27264 / PCC 7002 / PR-6) (Agmenellum quadruplicatum), this protein is Trigger factor.